Reading from the N-terminus, the 305-residue chain is Major fimbrium anchoring subunit FimB (305 aa).

Positions 1 to 22 (MNDAKKYIVSVLILLVAGMFGG) are cleaved as a signal peptide. Cysteine 23 carries N-palmitoyl cysteine lipidation. Cysteine 23 carries S-diacylglycerol cysteine lipidation.

This sequence belongs to the bacteroidetes fimbrillin superfamily. FimB/Mfa2 family. In terms of assembly, fimB is not part of the fimbrium itself, but anchors the fimbrium in the outer membrane. Linear, head-to-tail oligomerization of fimbrial subunits mediates assembly of the fimbrium stalk, while the minor components FimC, FimD and FimE probably form the fimbrium tip. The anchoring subunit FimB limits fimbrium length and is important for solid fimbrium attachment to the outer membrane. In its absence, the major fimbriae become very long and are easily detached from the membrane.

Its subcellular location is the cell outer membrane. Functionally, anchoring subunit of the major fimbriae. Regulates fimbrial length. These filamentous pili are attached to the cell surface; they mediate biofilm formation, adhesion onto host cells and onto other bacteria that are part of the oral microbiome. Fimbriae of P.gingivalis are major virulence factors. In Porphyromonas gingivalis (Bacteroides gingivalis), this protein is Major fimbrium anchoring subunit FimB.